The primary structure comprises 522 residues: Cytochrome P450 4F4 (522 aa).

Helical transmembrane passes span 15 to 35 (TSLP…VRVL) and 87 to 107 (GFMT…PDVI). Heme-binding residues include glutamate 328 and cysteine 468.

It belongs to the cytochrome P450 family. Heme serves as cofactor. Expressed in hepatocytes. High expression in liver and kidney. Lower expression in brain.

The protein localises to the endoplasmic reticulum membrane. Its subcellular location is the microsome membrane. The catalysed reaction is (5Z,8Z,11Z,14Z)-eicosatetraenoate + reduced [NADPH--hemoprotein reductase] + O2 = 20-hydroxy-(5Z,8Z,11Z,14Z)-eicosatetraenoate + oxidized [NADPH--hemoprotein reductase] + H2O + H(+). It carries out the reaction leukotriene B4 + reduced [NADPH--hemoprotein reductase] + O2 = 20-hydroxy-leukotriene B4 + oxidized [NADPH--hemoprotein reductase] + H2O + H(+). It catalyses the reaction 6-trans-leukotriene B4 + reduced [NADPH--hemoprotein reductase] + O2 = 20-hydroxy-6-trans-leukotriene B4 + oxidized [NADPH--hemoprotein reductase] + H2O + H(+). The enzyme catalyses prostaglandin A1 + reduced [NADPH--hemoprotein reductase] + O2 = 20-hydroxy prostaglandin A1 + oxidized [NADPH--hemoprotein reductase] + H2O + H(+). The catalysed reaction is prostaglandin E1 + reduced [NADPH--hemoprotein reductase] + O2 = 20-hydroxy prostaglandin E1 + oxidized [NADPH--hemoprotein reductase] + H2O + H(+). Functionally, a cytochrome P450 monooxygenase involved in the metabolism of arachidonic acid and its oxygenated derivatives. Mechanistically, uses molecular oxygen inserting one oxygen atom into a substrate, and reducing the second into a water molecule, with two electrons provided by NADPH via cytochrome P450 reductase (CPR; NADPH-ferrihemoprotein reductase). Participates in the conversion of arachidonic acid to omega-hydroxyeicosatetraenoic acid (20-HETE), a signaling molecule acting both as vasoconstrictive and natriuretic with overall effect on arterial blood pressure. Hydroxylates the terminal carbon (omega-hydroxylation) of inflammatory lipid mediators, including prostaglandin (PG) A1, PGE1 and leukotriene B4 (LTB4), and may play a role in inactivation of these oxylipins during the resolution of inflammation. In Rattus norvegicus (Rat), this protein is Cytochrome P450 4F4.